A 483-amino-acid polypeptide reads, in one-letter code: Type 2 glycosyltransferase (483 aa).

Residues 21–41 traverse the membrane as a helical segment; the sequence is AVVYLSALFTPWFTAFCVLWL. Residues 156 to 158 carry the Dxd motif motif; sequence DDD. Residues 301–305 carry the QxxxRW motif motif; that stretch reads QCSRW. Residue N313 is glycosylated (N-linked (GlcNAc...) asparagine). Helical transmembrane passes span 336-356, 369-389, and 396-416; these read IATF…ALWW, AIYA…VGLF, and IMFL…KIYA. N421 carries N-linked (GlcNAc...) asparagine glycosylation.

This sequence belongs to the GT2 glycosyltransferase family.

It is found in the cell membrane. Functionally, glycosyltransferase that plays an important role in infection-related morphogenesis and pathogenesis. Involved in stress tolerance and hyphal hydrophobicity via its regulation of the expression of nydrophobin MPG1. May regulate growth, pathogenicity, and cell wall integrity (CWI) through glycosylation of heat shock protein SSB1, and other (unidentified) substrates may contribute to conidiation. Candidate proteins as potential substrates of GT2 include several heat shock proteins (SSB1/MGG_02503, MGG_06759 and MGG_06958), two coiled-coil domain-containing proteins (MGG_04321 and MGG_09571), aminopeptidase 2 (MGG_16472), and a nuclease domain-containing protein (MGG_12646). The chain is Type 2 glycosyltransferase from Pyricularia oryzae (strain 70-15 / ATCC MYA-4617 / FGSC 8958) (Rice blast fungus).